Here is a 204-residue protein sequence, read N- to C-terminus: Large ribosomal subunit protein uL3c (204 aa).

A disordered region spans residues 126 to 155; that stretch reads HNFTRGPMTHGSKNHREPGSIGQGSTPAKV.

It belongs to the universal ribosomal protein uL3 family. Part of the 50S ribosomal subunit.

The protein localises to the plastid. Its subcellular location is the chloroplast. In terms of biological role, one of the primary rRNA binding proteins, it binds directly near the 3'-end of the 23S rRNA, where it nucleates assembly of the 50S subunit. This Guillardia theta (Cryptophyte) protein is Large ribosomal subunit protein uL3c (rpl3).